The chain runs to 190 residues: Casparian strip membrane protein 1 (190 aa).

Residues 1-24 (MKAESGSADAKLPLPPPVGRKRRG) are Cytoplasmic-facing. The helical transmembrane segment at 25–45 (LAILDFLLRLLAIGATLSAAI) threads the bilayer. Residues 46-72 (AMGTNNETLKFFTQFFQFNARFYNLSA) lie on the Extracellular side of the membrane. Asn-51 and Asn-69 each carry an N-linked (GlcNAc...) asparagine glycan. Residues 73–93 (FIYFVIANATVGLYLLLSLPF) form a helical membrane-spanning segment. The Cytoplasmic segment spans residues 94 to 107 (SIFDIVRPRAAAFR). Residues 108-128 (VLLIFFDTVMVAVCTSGAAAA) traverse the membrane as a helical segment. Topologically, residues 129–157 (TAIMYVARRGNTKTNWFSICQQFNSFCDQ) are extracellular. Residues 158–178 (ATGALGASFAAVVLLILLVLL) form a helical membrane-spanning segment. Topologically, residues 179 to 190 (SASTLHRQRADF) are cytoplasmic.

Belongs to the Casparian strip membrane proteins (CASP) family. Homodimer and heterodimers.

It localises to the cell membrane. Functionally, regulates membrane-cell wall junctions and localized cell wall deposition. Required for establishment of the Casparian strip membrane domain (CSD) and the subsequent formation of Casparian strips, a cell wall modification of the root endodermis that determines an apoplastic barrier between the intraorganismal apoplasm and the extraorganismal apoplasm and prevents lateral diffusion. In Pinus taeda (Loblolly pine), this protein is Casparian strip membrane protein 1.